A 434-amino-acid polypeptide reads, in one-letter code: [Pyruvate dehydrogenase (acetyl-transferring)] kinase isozyme 1, mitochondrial (434 aa).

Residues 1–26 (MRLARLLRGGTSVRPLCAVPCASRSL) constitute a mitochondrion transit peptide. At Tyr-136 the chain carries Phosphotyrosine; by FGFR1. The 231-residue stretch at 161–391 (TEYKESFGVD…DAVIYIKALS (231 aa)) folds into the Histidine kinase domain. Tyr-241 carries the post-translational modification Phosphotyrosine; by FGFR1, ABL1, FLT3 and JAK2. Tyr-242 is subject to Phosphotyrosine; by FGFR1. ATP contacts are provided by residues 277-284 (ELFKNAMR), Asp-316, 335-336 (ST), and 352-357 (GFGYGL). Thr-336 carries the phosphothreonine modification. Lys-403 is modified (N6-succinyllysine).

It belongs to the PDK/BCKDK protein kinase family. As to quaternary structure, homodimer, and heterodimer with PDK2. Interacts with the pyruvate dehydrogenase complex subunit DLAT, and is part of the multimeric pyruvate dehydrogenase complex that contains multiple copies of pyruvate dehydrogenase (E1), dihydrolipoamide acetyltransferase (DLAT, E2) and lipoamide dehydrogenase (DLD, E3). Interacts with phosphoglycerate kinase PGK1; the interaction is direct, occurs under hypoxic conditions and leads to PDK1-mediated inhibition of pyruvate dehydrogenase complex activity. In terms of processing, phosphorylated by constitutively activated ABL1, FGFR1, FLT3 and JAK2 (in vitro), and this may also occur in cancer cells that express constitutively activated ABL1, FGFR1, FLT3 and JAK2. Phosphorylation at Tyr-241 and Tyr-242 strongly increases kinase activity, while phosphorylation at Tyr-136 has a lesser effect. Phosphorylated under hypoxic conditions at Thr-336 by phosphoglycerate kinase PGK1 which has an activating effect.

The protein resides in the mitochondrion matrix. The enzyme catalyses L-seryl-[pyruvate dehydrogenase E1 alpha subunit] + ATP = O-phospho-L-seryl-[pyruvate dehydrogenase E1 alpha subunit] + ADP + H(+). Its function is as follows. Kinase that plays a key role in regulation of glucose and fatty acid metabolism and homeostasis via phosphorylation of the pyruvate dehydrogenase subunits PDHA1 and PDHA2. This inhibits pyruvate dehydrogenase activity, and thereby regulates metabolite flux through the tricarboxylic acid cycle, down-regulates aerobic respiration and inhibits the formation of acetyl-coenzyme A from pyruvate. Plays an important role in cellular responses to hypoxia and is important for cell proliferation under hypoxia. This is [Pyruvate dehydrogenase (acetyl-transferring)] kinase isozyme 1, mitochondrial (Pdk1) from Mus musculus (Mouse).